The sequence spans 430 residues: Agropine synthesis reductase (430 aa).

203 to 227 lines the NAD(+) pocket; it reads LVSGSNRGVGKAIAEDLIAHGYRLS. Serine 333 lines the substrate pocket. Tyrosine 346 acts as the Proton acceptor in catalysis.

It belongs to the short-chain dehydrogenases/reductases (SDR) family.

It functions in the pathway opine metabolism; mannopine biosynthesis. Functionally, reduces deoxy-fructosyl-glutamine to mannopine. The sequence is that of Agropine synthesis reductase (mas1) from Rhizobium rhizogenes (Agrobacterium rhizogenes).